A 123-amino-acid polypeptide reads, in one-letter code: Sterol carrier protein 2 (123 aa).

The SCP2 domain maps to 16-113; sequence KEHLSTDAGK…GSLSAAQKFT (98 aa). Positions 121–123 match the Microbody targeting signal motif; that stretch reads SKL.

As to expression, expressed in most tissues including seedlings, cotyledons, inflorescence, leaves, stems, roots, siliques and flower buds, with the highest levels in floral tissues and in maturing seeds.

It is found in the peroxisome. In terms of biological role, enhances the transfer of lipids between membranes in vitro. Active on phosphatidylcholine (PC), 1-palmitoyl 2-oleoyl phosphatidylcholine (POPC) and ergosterol, and, to a lower extent, dimyristoyl phosphatidic acid, stigmasterol, desmosterol, beta-sitosterol and steryl glucoside. Inactive or poorly active on palmitic acid, stearoyl-coenzyme A, cholesterol, glucosylceramide and ceramide. Required during seeds and seedlings development. The chain is Sterol carrier protein 2 from Arabidopsis thaliana (Mouse-ear cress).